Reading from the N-terminus, the 94-residue chain is Large ribosomal subunit protein uL23 (94 aa).

It belongs to the universal ribosomal protein uL23 family. As to quaternary structure, part of the 50S ribosomal subunit. Contacts protein L29, and trigger factor when it is bound to the ribosome.

In terms of biological role, one of the early assembly proteins it binds 23S rRNA. One of the proteins that surrounds the polypeptide exit tunnel on the outside of the ribosome. Forms the main docking site for trigger factor binding to the ribosome. The polypeptide is Large ribosomal subunit protein uL23 (Symbiobacterium thermophilum (strain DSM 24528 / JCM 14929 / IAM 14863 / T)).